We begin with the raw amino-acid sequence, 429 residues long: MDRIHITGGTPLNGTIPISGAKNAALPLMIASLLTGETLELINVPRLADIAALTRILGNHGVDHMVVGKRPGQTAETGQTVRLTASNVIDTTAPYELVSTMRASFWVIAPLLARFGEAKVSLPGGCAIGTRPVDLLLMALEKLGAEIEIDGGYVVAKTKNGLRGTEIDFPKVTVGGTHVALMAAALAYGTTVLDNAAREPEVVDLAECLIKMGARIEGAGTSRIVVEGVARLGGTRHEVLPDRIETGTYAMAVAMTGGDVSLVNTRTDLLASALETLASTGTEVTALPDGIRVRRNGGGISPADVTTDPFPGFPTDLQAQFMALMTLAKGQSRIRETIFENRFMHVQELARLGARIRLDGDLAVVEGVERLKGAPVMATDLRASVSLVIGALAAEGETQINRVYHLDRGFEALEAKLARCGAQIERVRA.

22-23 lines the phosphoenolpyruvate pocket; sequence KN. Residue Arg-102 participates in UDP-N-acetyl-alpha-D-glucosamine binding. The active-site Proton donor is Cys-126. Cys-126 bears the 2-(S-cysteinyl)pyruvic acid O-phosphothioketal mark. UDP-N-acetyl-alpha-D-glucosamine is bound by residues 131–135, Asp-316, and Ile-338; that span reads RPVDL.

The protein belongs to the EPSP synthase family. MurA subfamily.

The protein localises to the cytoplasm. It catalyses the reaction phosphoenolpyruvate + UDP-N-acetyl-alpha-D-glucosamine = UDP-N-acetyl-3-O-(1-carboxyvinyl)-alpha-D-glucosamine + phosphate. It participates in cell wall biogenesis; peptidoglycan biosynthesis. Functionally, cell wall formation. Adds enolpyruvyl to UDP-N-acetylglucosamine. The chain is UDP-N-acetylglucosamine 1-carboxyvinyltransferase from Methylorubrum extorquens (strain CM4 / NCIMB 13688) (Methylobacterium extorquens).